Here is a 31-residue protein sequence, read N- to C-terminus: Malate dehydrogenase, mitochondrial (31 aa).

NAD(+) contacts are provided by residues 9 to 19 (GIGQPLSLLMK) and 20 to 31 (DDLFNINAGIVK).

The protein belongs to the LDH/MDH superfamily. MDH type 1 family. In terms of assembly, homodimer.

It localises to the mitochondrion matrix. The catalysed reaction is (S)-malate + NAD(+) = oxaloacetate + NADH + H(+). The protein is Malate dehydrogenase, mitochondrial of Imperata cylindrica (Cogon grass).